The sequence spans 696 residues: PWWP domain-containing DNA repair factor 3B (696 aa).

Polar residues-rich tracts occupy residues 119–128 and 290–300; these read QNVPQKQSDS and CLDTSQNQPSM. Disordered regions lie at residues 119–143 and 278–303; these read QNVP…DLPG and NIED…MESE. S128 carries the phosphoserine modification. The 62-residue stretch at 392–453 folds into the PWWP domain; it reads TGMIVWFKYQ…KKFDCKEKQM (62 aa).

Belongs to the PWWP3A family.

This Homo sapiens (Human) protein is PWWP domain-containing DNA repair factor 3B.